Here is a 332-residue protein sequence, read N- to C-terminus: Anthranilate phosphoribosyltransferase (332 aa).

5-phospho-alpha-D-ribose 1-diphosphate contacts are provided by residues glycine 79, 82–83 (GD), threonine 87, 89–92 (NIST), 107–115 (KHGNRSVSS), and serine 119. Glycine 79 contributes to the anthranilate binding site. A Mg(2+)-binding site is contributed by serine 91. Asparagine 110 lines the anthranilate pocket. Arginine 165 is an anthranilate binding site. Residues aspartate 223 and glutamate 224 each contribute to the Mg(2+) site.

The protein belongs to the anthranilate phosphoribosyltransferase family. Homodimer. Mg(2+) serves as cofactor.

The catalysed reaction is N-(5-phospho-beta-D-ribosyl)anthranilate + diphosphate = 5-phospho-alpha-D-ribose 1-diphosphate + anthranilate. Its pathway is amino-acid biosynthesis; L-tryptophan biosynthesis; L-tryptophan from chorismate: step 2/5. Catalyzes the transfer of the phosphoribosyl group of 5-phosphorylribose-1-pyrophosphate (PRPP) to anthranilate to yield N-(5'-phosphoribosyl)-anthranilate (PRA). The chain is Anthranilate phosphoribosyltransferase from Vibrio parahaemolyticus serotype O3:K6 (strain RIMD 2210633).